The chain runs to 117 residues: Large ribosomal subunit protein bL20 (117 aa).

This sequence belongs to the bacterial ribosomal protein bL20 family.

Binds directly to 23S ribosomal RNA and is necessary for the in vitro assembly process of the 50S ribosomal subunit. It is not involved in the protein synthesizing functions of that subunit. The sequence is that of Large ribosomal subunit protein bL20 from Limosilactobacillus reuteri (strain DSM 20016) (Lactobacillus reuteri).